Here is a 119-residue protein sequence, read N- to C-terminus: Large ribosomal subunit protein bL20 (119 aa).

It belongs to the bacterial ribosomal protein bL20 family.

Its function is as follows. Binds directly to 23S ribosomal RNA and is necessary for the in vitro assembly process of the 50S ribosomal subunit. It is not involved in the protein synthesizing functions of that subunit. In Paracoccus denitrificans (strain Pd 1222), this protein is Large ribosomal subunit protein bL20.